Here is a 476-residue protein sequence, read N- to C-terminus: Dihydrolipoyl dehydrogenase (476 aa).

Residues 36-45 (EHQERLGGVC), K54, and A117 contribute to the FAD site. A disulfide bond links C45 and C50. Residues 182-186 (GGGII), D205, V238, and 271-274 (AIGR) each bind NAD(+). Positions 314 and 322 each coordinate FAD. H446 serves as the catalytic Proton acceptor.

It belongs to the class-I pyridine nucleotide-disulfide oxidoreductase family. In terms of assembly, homodimer. FAD serves as cofactor.

It localises to the cytoplasm. It catalyses the reaction N(6)-[(R)-dihydrolipoyl]-L-lysyl-[protein] + NAD(+) = N(6)-[(R)-lipoyl]-L-lysyl-[protein] + NADH + H(+). Functionally, lipoamide dehydrogenase is a component of the alpha-ketoacid dehydrogenase complexes. This Buchnera aphidicola subsp. Schizaphis graminum (strain Sg) protein is Dihydrolipoyl dehydrogenase (lpdA).